We begin with the raw amino-acid sequence, 278 residues long: MDVRQSIHSEHAKTLDTQALRREFLIENIFVADEYTMVYSHIDRIIVGGIMPVSHPVEIGGEVGKQLGVSRLLDRRELGVINIGGAGAIIVDGQRHDIGHRDALYISKGAKELVFVSNEASRPAKFYYNCAPAHTAYPTKKVSPADVAPVTLGDNLTSNRRTINKYFVPDVLETCQLSMGLTELAPGNLWNTMPCHTHERRMEVYLYFNMEEDSCVFHMMGQPQETRHIVMRNEQAVISPSWSIHSGVGTKAYTFIWGMVGENQVFDDMDHVAVQDLR.

Zn(2+) is bound by residues His-196, His-198, Glu-203, and His-245.

It belongs to the KduI family. Requires Zn(2+) as cofactor.

The catalysed reaction is 5-dehydro-4-deoxy-D-glucuronate = 3-deoxy-D-glycero-2,5-hexodiulosonate. It functions in the pathway glycan metabolism; pectin degradation; 2-dehydro-3-deoxy-D-gluconate from pectin: step 4/5. In terms of biological role, catalyzes the isomerization of 5-dehydro-4-deoxy-D-glucuronate to 3-deoxy-D-glycero-2,5-hexodiulosonate. This Salmonella paratyphi A (strain ATCC 9150 / SARB42) protein is 4-deoxy-L-threo-5-hexosulose-uronate ketol-isomerase.